A 490-amino-acid polypeptide reads, in one-letter code: Ribulose bisphosphate carboxylase large chain (490 aa).

Positions 127 and 177 each coordinate substrate. Lys179 functions as the Proton acceptor in the catalytic mechanism. Lys181 serves as a coordination point for substrate. Lys205, Asp207, and Glu208 together coordinate Mg(2+). At Lys205 the chain carries N6-carboxylysine. The Proton acceptor role is filled by His297. Residues Arg298, His330, and Ser382 each contribute to the substrate site.

It belongs to the RuBisCO large chain family. Type I subfamily. Heterohexadecamer of 8 large chains and 8 small chains. It depends on Mg(2+) as a cofactor.

The protein resides in the plastid. The protein localises to the chloroplast. It carries out the reaction 2 (2R)-3-phosphoglycerate + 2 H(+) = D-ribulose 1,5-bisphosphate + CO2 + H2O. The enzyme catalyses D-ribulose 1,5-bisphosphate + O2 = 2-phosphoglycolate + (2R)-3-phosphoglycerate + 2 H(+). In terms of biological role, ruBisCO catalyzes two reactions: the carboxylation of D-ribulose 1,5-bisphosphate, the primary event in carbon dioxide fixation, as well as the oxidative fragmentation of the pentose substrate in the photorespiration process. Both reactions occur simultaneously and in competition at the same active site. The chain is Ribulose bisphosphate carboxylase large chain from Trieres chinensis (Marine centric diatom).